Here is a 298-residue protein sequence, read N- to C-terminus: MVKIGSHVSMSGKKMLLAASEEAVSYGATTFMIYTGAPQNTRRKPIEELNIEAGRKHMEQNGIEEIIVHAPYIINVGNTTKPETFQLGVDFLRMEIERTSALGVAKQIVLHPGAHVGAGADAGIQQIIKGLNEVLTPDQTVNIALETMAGKGTECGRSFEEIAKIIDGVKYNEKLSVCFDTCHTHDAGYDIVNDFDGVLNEFDKIVGIDRLQVLHINDSKNVRGAGKDRHENIGFGHIGYKALHHIVHHPQLTHVPKILETPYVGEDKKDKKPPYKLEIEMLKNGTFDEGLLEKIKAQ.

His-69, His-111, Glu-146, Asp-180, His-183, His-215, Asp-228, His-230, and Glu-260 together coordinate Zn(2+).

This sequence belongs to the AP endonuclease 2 family. It depends on Zn(2+) as a cofactor.

The catalysed reaction is Endonucleolytic cleavage to 5'-phosphooligonucleotide end-products.. In terms of biological role, endonuclease IV plays a role in DNA repair. It cleaves phosphodiester bonds at apurinic or apyrimidinic (AP) sites, generating a 3'-hydroxyl group and a 5'-terminal sugar phosphate. The sequence is that of Probable endonuclease 4 from Bacillus cereus (strain AH820).